The chain runs to 431 residues: MMRLLSFDDSDFGAALGAIVARGETPPEGVEETVAEILEAVRLQGDRALLEYTTRFDGLDLTAAQLQVTAEEIEAALAAVDSESMAALQLAADRIAAFHRRQKTETWLTTDEQDVMLGQMVQPLERVGIYVPGGKASYPSSVLMNAIPAKVAGVAEVVMVVPMPHGEVNPHVLAAAHLAGVDRIFKIGGAQAVAALAYGTESVPRVDKITGPGNIYVATAKKMVFGQVDIDMIAGPSEILVINDGSGTPEHIAVDLLSQAEHDELAAAILVTTDADFGRRVQQAVEEQLATLKRAAIARCSIDAFGAILVARDLEQAVALSNSIAPEHLELAVDDPFSLLPRIRHAGAIFMGHHCPEAAGDYLAGPNHTLPTGGTARFFSPLGVDDFVKKSSIISFSREGLDRLGRSIVHLAELEGLEAHGRSVSIRLKDS.

3 residues coordinate NAD(+): Tyr-130, Gln-191, and Asn-214. Substrate contacts are provided by Ser-237, Gln-259, and His-262. The Zn(2+) site is built by Gln-259 and His-262. Residues Glu-327 and His-328 each act as proton acceptor in the active site. Substrate-binding residues include His-328, Asp-361, Glu-415, and His-420. Asp-361 contributes to the Zn(2+) binding site. Residue His-420 participates in Zn(2+) binding.

This sequence belongs to the histidinol dehydrogenase family. Zn(2+) is required as a cofactor.

It carries out the reaction L-histidinol + 2 NAD(+) + H2O = L-histidine + 2 NADH + 3 H(+). The protein operates within amino-acid biosynthesis; L-histidine biosynthesis; L-histidine from 5-phospho-alpha-D-ribose 1-diphosphate: step 9/9. Functionally, catalyzes the sequential NAD-dependent oxidations of L-histidinol to L-histidinaldehyde and then to L-histidine. The sequence is that of Histidinol dehydrogenase from Syntrophotalea carbinolica (strain DSM 2380 / NBRC 103641 / GraBd1) (Pelobacter carbinolicus).